The primary structure comprises 592 residues: V-type ATP synthase alpha chain (592 aa).

Residue 233–240 (GPFGSGKT) coordinates ATP.

It belongs to the ATPase alpha/beta chains family.

It catalyses the reaction ATP + H2O + 4 H(+)(in) = ADP + phosphate + 5 H(+)(out). Functionally, produces ATP from ADP in the presence of a proton gradient across the membrane. The V-type alpha chain is a catalytic subunit. The chain is V-type ATP synthase alpha chain from Clostridium botulinum (strain Okra / Type B1).